Consider the following 188-residue polypeptide: E3 ubiquitin-protein ligase RNF183 (188 aa).

Residues 1 to 157 (MAEQQGREPE…RECFRNPHFR (157 aa)) lie on the Cytoplasmic side of the membrane. The segment at 11–58 (CPVCWNPFNNTFHTPKVLDCCHSFCVECLAHISLVTPTRRRLLCPLCR) adopts an RING-type zinc-finger fold. The helical; Anchor for type IV membrane protein transmembrane segment at 158–178 (IFAYMMAVILCGTVLFIFSIF) threads the bilayer. Residues 179–188 (CTRRFFWGVG) lie on the Lumenal side of the membrane.

Interacts with FATE1. Interacts with SEC16A. Interacts with BCL2L1. In terms of processing, autoubiquitinated (in vitro).

The protein localises to the endoplasmic reticulum membrane. It is found in the endoplasmic reticulum. The protein resides in the golgi apparatus. Its subcellular location is the cis-Golgi network membrane. It localises to the lysosome. The catalysed reaction is S-ubiquitinyl-[E2 ubiquitin-conjugating enzyme]-L-cysteine + [acceptor protein]-L-lysine = [E2 ubiquitin-conjugating enzyme]-L-cysteine + N(6)-ubiquitinyl-[acceptor protein]-L-lysine.. It participates in protein modification; protein ubiquitination. Functionally, acts as an E3 ubiquitin ligase catalyzing the covalent attachment of ubiquitin moieties onto substrate proteins. Triggers apoptosis in response to prolonged ER stress by mediating the polyubiquitination and subsequent proteasomal degradation of BCL2L1. May collaborate with FATE1 to restrain BIK protein levels thus regulating apoptotic signaling. In Bos taurus (Bovine), this protein is E3 ubiquitin-protein ligase RNF183 (RNF183).